Consider the following 319-residue polypeptide: CCAAT/enhancer-binding protein homolog 1 (319 aa).

The interval 53–67 (SLTIAASLQQRDRER) is n' domain; required for axon regeneration. A disordered region spans residues 163 to 319 (TRRAVKRPVP…QRHILENFNK (157 aa)). Residues 171 to 181 (VPYDDYQKEYS) show a composition bias toward basic and acidic residues. Residues 182 to 198 (EESSDMTDNDGSVDDSY) show a composition bias toward acidic residues. Basic and acidic residues-rich tracts occupy residues 225–248 (LKAD…DAVR), 255–274 (KELQ…RIAE), 281–291 (SERDARRRDQD), and 302–319 (PMKE…NFNK). The bZIP domain occupies 233-308 (EPTYKLKRAR…NKGPMKEQRM (76 aa)). Residues 237–271 (KLKRARNNDAVRKSRKKAKELQDKKEAEHDKMKRR) are basic motif. The interval 275 to 308 (LEGLLQSERDARRRDQDTLEQLLRNKGPMKEQRM) is leucine-zipper.

The protein belongs to the bZIP family. C/EBP subfamily. May interact with transcription factor ets-4. May interact (via N-terminus) with nipi-3. May interact (via N-terminus) with importin subunit alpha ima-3. Expressed in touch and motor neurons.

The protein localises to the synapse. The protein resides in the cytoplasm. It localises to the nucleus. Its subcellular location is the cell projection. It is found in the axon. Transcription factor. Binds to promoter regions of target genes, perhaps at the motif 5'-[AGCT]TT[AGT][TC]GAAA[ACT]-3'. Modulates expression of genes involved in development and in stress responses, including those regulating the p38/MAPK signaling pathways such as MAPKK sek-1 and phosphatase vhp-1. Involved in innate immunity. Plays a role in repressing the response to infection by the Gram-negative bacterium P.aeruginosa, perhaps acting independently of the pmk-1 or pmk-3 p38/MAPK pathways. However, also plays a protective role in the response to infection by P.aeruginosa. Required in axonal regrowth following injury and synaptogenesis. Following axon injury, in concert with transcription factor ets-4, activates expression of receptor tyrosine kinase svh-2. May function downstream of the Ca2+-activated p38/MAPK pathway to promote axon regeneration. Plays a role in modulating polymerization of neuronal microtubules. Involved in modulating lipid homeostasis. The polypeptide is CCAAT/enhancer-binding protein homolog 1 (Caenorhabditis elegans).